Consider the following 284-residue polypeptide: MPTVQSTCWVFTLNFKGEIPILPFNERVQYACWQHERVGHDHLQGFIQMKAQQSLGQMKAIIPGAHFEKMRALNSDQAKAYAMKEDTRIEGPWEYGKYIKKGSHKRKIMERFEDDPEEMKIEDPSLYRRCLSRKMTEEQRSTAEWNYDMKPWQDQVIQEIEETPDYRKIIWVYGPKGGEGKSTFARYLSLKQGWGYLPGGPTHDMLHIISGEPKNNWVFDIPRVASEYVNYGVLEQVKNRVMVNTKYEPIVIRDDNHPVHVIVFANCMPDFTKISEDRMKIVHC.

Positions 3 to 98 constitute a CRESS-DNA virus Rep endonuclease domain; that stretch reads TVQSTCWVFT…IEGPWEYGKY (96 aa). Residues 10-13 carry the RCR-1 motif; that stretch reads VFTL. Positions 36 and 42 each coordinate a divalent metal cation. An RCR-2 motif is present at residues 42-44; it reads HLQ. The Nuclear localization signal motif lies at 51 to 71; it reads AQQSLGQMKAIIPGAHFEKMR. The For DNA cleavage activity role is filled by Tyr81. The RCR-3 motif lies at 81–84; sequence YAMK. Position 86 (Asp86) interacts with a divalent metal cation. The Nuclear localization signal motif lies at 98 to 104; it reads YIKKGSH. 174-182 serves as a coordination point for ATP; sequence GPKGGEGKS.

The protein belongs to the nanoviridea/circoviridae replication-associated protein family. Homooligomer (Potential). Rep binds to repeated DNA motifs (iterons). Requires Mg(2+) as cofactor. Mn(2+) serves as cofactor.

It is found in the host nucleus. The catalysed reaction is ATP + H2O = ADP + phosphate + H(+). Its function is as follows. Initiates and terminates the replication only of its own subviral DNA molecule. The closed circular ssDNA genome is first converted to a superhelical dsDNA. Rep binds a specific hairpin at the genome origin of replication. Introduces an endonucleolytic nick within the intergenic region of the genome, thereby initiating the rolling circle replication (RCR). Following cleavage, binds covalently to the 5'-phosphate of DNA as a tyrosyl ester. The cleavage gives rise to a free 3'-OH that serves as a primer for the cellular DNA polymerase. The polymerase synthesizes the (+) strand DNA by rolling circle mechanism. After one round of replication, a Rep-catalyzed nucleotidyl transfer reaction releases a circular single-stranded virus genome, thereby terminating the replication. Displays origin-specific DNA cleavage, nucleotidyl transferase, ATPase and helicase activities. This chain is Para-Rep C3 (C3), found in Milk vetch dwarf C3 alphasatellite (MVDC3A).